Consider the following 966-residue polypeptide: Alanine--tRNA ligase (966 aa).

Zn(2+)-binding residues include H646, H650, C750, and H754. Positions 927 to 949 (DRLGGGGGGRPSLASAGGRDPEA) are disordered.

This sequence belongs to the class-II aminoacyl-tRNA synthetase family. Zn(2+) is required as a cofactor.

It is found in the cytoplasm. It catalyses the reaction tRNA(Ala) + L-alanine + ATP = L-alanyl-tRNA(Ala) + AMP + diphosphate. In terms of biological role, catalyzes the attachment of alanine to tRNA(Ala) in a two-step reaction: alanine is first activated by ATP to form Ala-AMP and then transferred to the acceptor end of tRNA(Ala). Also edits incorrectly charged Ser-tRNA(Ala) and Gly-tRNA(Ala) via its editing domain. This is Alanine--tRNA ligase from Salinibacter ruber (strain DSM 13855 / M31).